A 186-amino-acid chain; its full sequence is Ribosome-recycling factor (186 aa).

It belongs to the RRF family.

The protein resides in the cytoplasm. Responsible for the release of ribosomes from messenger RNA at the termination of protein biosynthesis. May increase the efficiency of translation by recycling ribosomes from one round of translation to another. This is Ribosome-recycling factor from Rickettsia bellii (strain OSU 85-389).